Reading from the N-terminus, the 123-residue chain is WAP four-disulfide core domain protein 5 (123 aa).

The N-terminal stretch at methionine 1–glycine 24 is a signal peptide. WAP domains follow at residues lysine 27 to isoleucine 74 and leucine 75 to alanine 121. Cystine bridges form between cysteine 34–cysteine 62, cysteine 41–cysteine 66, cysteine 49–cysteine 61, cysteine 55–cysteine 70, cysteine 81–cysteine 109, cysteine 88–cysteine 113, cysteine 96–cysteine 108, and cysteine 102–cysteine 117.

It is found in the secreted. In terms of biological role, putative acid-stable proteinase inhibitor. The protein is WAP four-disulfide core domain protein 5 (WFDC5) of Lemur catta (Ring-tailed lemur).